Here is a 244-residue protein sequence, read N- to C-terminus: 5-oxoprolinase subunit A (244 aa).

This sequence belongs to the LamB/PxpA family. In terms of assembly, forms a complex composed of PxpA, PxpB and PxpC.

It catalyses the reaction 5-oxo-L-proline + ATP + 2 H2O = L-glutamate + ADP + phosphate + H(+). Its function is as follows. Catalyzes the cleavage of 5-oxoproline to form L-glutamate coupled to the hydrolysis of ATP to ADP and inorganic phosphate. The sequence is that of 5-oxoprolinase subunit A from Citrobacter koseri (strain ATCC BAA-895 / CDC 4225-83 / SGSC4696).